A 1163-amino-acid polypeptide reads, in one-letter code: Zinc finger protein 516 (1163 aa).

Positions 1-13 (MDRNREAEMELRR) are enriched in basic and acidic residues. A disordered region spans residues 1–26 (MDRNREAEMELRRGPSPTRAGRGHEV). The tract at residues 1–431 (MDRNREAEME…ATRGKVAEPA (431 aa)) is mediates promoter DNA-binding and activation of transcription. 7 C2H2-type zinc fingers span residues 34–56 (HTCC…MRKH), 62–84 (YKCP…IRSH), 174–197 (VQCS…HQAH), 200–223 (FKCR…ERDH), 248–270 (FPCE…MKKH), 276–298 (HGCH…MKAH), and 335–357 (EVCA…NAIH). Basic and acidic residues predominate over residues 460–469 (SQEKRKREQD). Disordered regions lie at residues 460–512 (SQEK…TGQG), 533–667 (HSRV…QEQH), and 679–730 (HPKQ…APDL). A compositionally biased stretch (low complexity) spans 496 to 507 (RSAARPNRRAAA). The segment at 515-537 (SECFECGKIFRTYHQMVLHSRVH) adopts a C2H2-type 8 zinc-finger fold. Over residues 542–552 (RERDSDGDRAA) the composition is skewed to basic and acidic residues. Residues 561-572 (EGDSASQPSSPG) are compositionally biased toward polar residues. A compositionally biased stretch (acidic residues) spans 588-598 (EAAEDSGEEGA). Residues 615 to 625 (EVTSTELSSGD) show a composition bias toward polar residues. Residues 626–641 (QSHKMGDNASERDTGE) show a composition bias toward basic and acidic residues. A Glycyl lysine isopeptide (Lys-Gly) (interchain with G-Cter in SUMO2) cross-link involves residue Lys-643. The span at 656-667 (SSRETSRRQEQH) shows a compositional bias: basic and acidic residues. A Glycyl lysine isopeptide (Lys-Gly) (interchain with G-Cter in SUMO2) cross-link involves residue Lys-681. Residues 706 to 720 (PAEKLSDLHNKEHSG) show a composition bias toward basic and acidic residues. The segment at 760-783 (HPCPYCSHKTYYPEVLWMHKRIWH) adopts a C2H2-type 9; atypical zinc-finger fold. A disordered region spans residues 838–1007 (TQVPGGMPGS…PPREPPSKAA (170 aa)). The span at 840 to 857 (VPGGMPGSKSGSSPLGVV) shows a compositional bias: low complexity. Glycyl lysine isopeptide (Lys-Gly) (interchain with G-Cter in SUMO2) cross-links involve residues Lys-1043 and Lys-1062. Residues 1098-1120 (FVCIECGKSFHQPGHLRAHMRAH) form a C2H2-type 10 zinc finger. A disordered region spans residues 1126–1163 (SDGPRGSEVHTTSADAPKQGRDHSNTGTVQTVPLRKGT).

The protein belongs to the krueppel C2H2-type zinc-finger protein family. Interacts with PRDM16; the interaction is direct and may play a role in the transcription of brown adipose tissue-specific genes. Interacts with PWWP2B. Interacts with HDAC1; this interaction is enhanced in the presence of PWWP2B.

Its subcellular location is the nucleus. In terms of biological role, transcriptional regulator that binds to the promoter and activates the transcription of genes promoting brown adipose tissue (BAT) differentiation. Among brown adipose tissue-specific genes, binds the proximal region of the promoter of the UCP1 gene to activate its transcription and thereby regulate thermogenesis. May also play a role in the cellular response to replication stress. This Homo sapiens (Human) protein is Zinc finger protein 516.